The primary structure comprises 393 residues: Major outer membrane porin, serovar E (393 aa).

The first 22 residues, 1–22, serve as a signal peptide directing secretion; the sequence is MKKLLKSVLVFAALSSASSLQA.

The protein belongs to the chlamydial porin (CP) (TC 1.B.2) family. In terms of assembly, part of a disulfide cross-linked outer membrane complex (COMC) composed of the major outer membrane porin (MOMP), the small cysteine-rich protein (OmcA) and the large cysteine-rich periplasmic protein (OmcB).

Its subcellular location is the cell outer membrane. Its function is as follows. In elementary bodies (EBs, the infectious stage, which is able to survive outside the host cell) provides the structural integrity of the outer envelope through disulfide cross-links with the small cysteine-rich protein and the large cysteine-rich periplasmic protein. It has been described in publications as the Sarkosyl-insoluble COMC (Chlamydia outer membrane complex), and serves as the functional equivalent of peptidoglycan. Functionally, permits diffusion of specific solutes through the outer membrane. This Chlamydia trachomatis protein is Major outer membrane porin, serovar E (ompA).